A 606-amino-acid polypeptide reads, in one-letter code: Serine/threonine-protein kinase A-Raf (606 aa).

Positions 19–91 (GTVKVYLPNK…DGEELIVEVL (73 aa)) constitute an RBD domain. The Phorbol-ester/DAG-type zinc finger occupies 98–144 (MHNFVRKTFFSLAFCDFCLKFLFHGFRCQTCGYKFHQHCSSKVPTVC). Zn(2+) is bound by residues H99, C112, C115, C125, C128, H133, C136, and C144. A phosphoserine mark is found at S157 and S162. 2 disordered regions span residues 158–207 (VQDL…NAPL) and 241–290 (TDAA…DKKK). At T181 the chain carries Phosphothreonine. S186, S257, and S269 each carry phosphoserine. Low complexity predominate over residues 254–267 (PRGSPSPASVSSGR). Basic and acidic residues predominate over residues 274-289 (SPSEQRERKSLADDKK). Residues 310–570 (VQLLKRIGTG…PQILATIELL (261 aa)) form the Protein kinase domain. ATP is bound by residues 316 to 324 (IGTGSFGTV) and K336. T318 carries the post-translational modification Phosphothreonine. The Proton acceptor role is filled by D429.

It belongs to the protein kinase superfamily. TKL Ser/Thr protein kinase family. RAF subfamily. In terms of assembly, interacts with TH1L/NELFD. Zn(2+) is required as a cofactor. In terms of processing, dephosphorylation by the SHOC2-MRAS-PP1c (SMP) complex consisting of SHOC2, GTP-bound M-Ras/MRAS and the catalytic subunit of protein phosphatase 1 (PPP1CA, PPP1CB or PPP1CC); this relieves inactivation and stimulates kinase activity.

The enzyme catalyses L-seryl-[protein] + ATP = O-phospho-L-seryl-[protein] + ADP + H(+). It catalyses the reaction L-threonyl-[protein] + ATP = O-phospho-L-threonyl-[protein] + ADP + H(+). In terms of biological role, involved in the transduction of mitogenic signals from the cell membrane to the nucleus. May also regulate the TOR signaling cascade. Phosphorylates PFKFB2. This chain is Serine/threonine-protein kinase A-Raf (ARAF), found in Sus scrofa (Pig).